Reading from the N-terminus, the 110-residue chain is Bowman-Birk type proteinase inhibitor (110 aa).

An N-terminal signal peptide occupies residues 1 to 28 (MVLMNKKAIMKLALMLFLLGFTANVVDA). Residues 29 to 42 (RFDSTSFITQVLSN) constitute a propeptide that is removed on maturation. 7 cysteine pairs are disulfide-bonded: Cys50–Cys103, Cys51–Cys66, Cys54–Cys99, Cys56–Cys64, Cys73–Cys80, Cys77–Cys92, and Cys82–Cys90.

Monomer.

Its function is as follows. Inhibitor of trypsin and of chymotrypsin. The polypeptide is Bowman-Birk type proteinase inhibitor (Lens culinaris (Lentil)).